Here is a 111-residue protein sequence, read N- to C-terminus: Cornifelin homolog B (111 aa).

It belongs to the cornifelin family.

This chain is Cornifelin homolog B (cnfn-b), found in Xenopus laevis (African clawed frog).